The sequence spans 73 residues: Serine rich endogenous peptide 14 (73 aa).

The signal sequence occupies residues 1 to 31 (MAAKTSNLVALLLSLFLLLLSISSQVGLGEA). The disordered stretch occupies residues 44 to 73 (VSHPSPPPPHRSMAPPIFVPPSTSHKGQGP). Positions 59-73 (PIFVPPSTSHKGQGP) match the SCOOP motif motif. Residues 64-73 (PSTSHKGQGP) show a composition bias toward polar residues. The SxS motif essential for MIK2 binding signature appears at 65–67 (STS).

The protein belongs to the serine rich endogenous peptide (SCOOP) phytocytokine family. In terms of assembly, interacts with MIK2 (via extracellular leucine-rich repeat domain); this interaction triggers the formation of complex between MIK2 and the BAK1/SERK3 and SERK4 coreceptors, and subsequent BAK1 activation by phosphorylation. As to expression, mostly expressed in seedlings shoots and leaves, and, to a lower extent, in roots, stems, siliques, seeds and flowers.

The protein resides in the cell membrane. It localises to the secreted. Its subcellular location is the extracellular space. The protein localises to the apoplast. Brassicaceae-specific phytocytokine (plant endogenous peptide released into the apoplast) perceived by MIK2 in a BAK1/SERK3 and SERK4 coreceptors-dependent manner, that modulates various physiological and antimicrobial processes including growth prevention and reactive oxygen species (ROS) response regulation. Inhibits root growth and regulates root meristems. Prevents general growth and development. Exhibits antibacterial effects against Pseudomonas syringae pv. tomato DC3000, Ralstonia solanacearum, Bacillus subtilis and Agrobacterium tumefaciens, thus being an antimicrobial peptide (AMP). The polypeptide is Serine rich endogenous peptide 14 (Arabidopsis thaliana (Mouse-ear cress)).